The sequence spans 149 residues: MRGPVGVRRDIEDTMRMLKLLRRNWCVLIDDRPSYLGMLQKIKDYVTWGEVEPDTVAALLKKRGELEGGRPVTDEYVSEHTEYDSVEEFARAYCEFEAELDDIPKLKPFFRLHPPRGGYERGGIKKPYTLGGALGYRGKAINDLLERMI.

Belongs to the universal ribosomal protein uL30 family. Part of the 50S ribosomal subunit.

This is Large ribosomal subunit protein uL30 from Methanopyrus kandleri (strain AV19 / DSM 6324 / JCM 9639 / NBRC 100938).